A 530-amino-acid polypeptide reads, in one-letter code: Developmental and secondary metabolism regulator VEL1 (530 aa).

One can recognise a Velvet domain in the interval 26 to 220 (NRSLWYQMTV…ADQGCQVRIR (195 aa)). The Nuclear localization signal motif lies at 40 to 45 (ERARAC). Residues 206–516 (LSKTVADQGC…HDQGWYSRAD (311 aa)) form a disordered region. The segment covering 244 to 253 (FERREEDFGR) has biased composition (basic and acidic residues). Residues 295–305 (YPPPPPPPSYE) are compositionally biased toward pro residues. Positions 347–356 (YAPTAQSPYS) are enriched in polar residues. Residues 380-389 (VKHDLYDRRQ) show a composition bias toward basic and acidic residues. Positions 390–404 (STSSYVPPSPSVYST) are enriched in low complexity. Residues 415–426 (SYPPTPVAAPRP) are compositionally biased toward pro residues. Residues 429 to 460 (MHSQTSLPALKIDQLVSPVSPLPPIEPQTGPA) are PEST. Polar residues predominate over residues 478–490 (FAQSTRPLHNGQR).

It belongs to the velvet family. VeA subfamily. As to quaternary structure, component of the heterotrimeric velvet complex composed of LAE1, VEL1 and VEL2; VEL1 acting as a bridging protein between LAE1 and VEL2. Interacts with LAE1.

It localises to the nucleus. The protein resides in the cytoplasm. In terms of biological role, component of the velvet transcription factor complex that controls sexual/asexual developmental ratio in response to light, promoting sexual development in the darkness while stimulating asexual sporulation under illumination. The velvet complex hat acts as a global regulator for secondary metabolite gene expression. Controls positively the expression of the gibberellins, fumonisins and fusarin C gene clusters. Controls the expression of the fusaric acid gene cluster. Controls negatively the expression of the bikaverin gene cluster. Regulates the expression of laeA. Plays a crucial role in virulence. This is Developmental and secondary metabolism regulator VEL1 from Gibberella fujikuroi (strain CBS 195.34 / IMI 58289 / NRRL A-6831) (Bakanae and foot rot disease fungus).